The sequence spans 279 residues: Proteasome subunit beta (279 aa).

Positions 1-53 (MSGTAEFPGRIPAPYLEVGSSSFVELLGSVAPELLPGRRPLPPGDMGDAAPHG) are cleaved as a propeptide — removed in mature form; by autocatalysis. The active-site Nucleophile is the T54.

The protein belongs to the peptidase T1B family. As to quaternary structure, the 20S proteasome core is composed of 14 alpha and 14 beta subunits that assemble into four stacked heptameric rings, resulting in a barrel-shaped structure. The two inner rings, each composed of seven catalytic beta subunits, are sandwiched by two outer rings, each composed of seven alpha subunits. The catalytic chamber with the active sites is on the inside of the barrel. Has a gated structure, the ends of the cylinder being occluded by the N-termini of the alpha-subunits. Is capped by the proteasome-associated ATPase, ARC.

The protein resides in the cytoplasm. The enzyme catalyses Cleavage of peptide bonds with very broad specificity.. The protein operates within protein degradation; proteasomal Pup-dependent pathway. Its activity is regulated as follows. The formation of the proteasomal ATPase ARC-20S proteasome complex, likely via the docking of the C-termini of ARC into the intersubunit pockets in the alpha-rings, may trigger opening of the gate for substrate entry. Interconversion between the open-gate and close-gate conformations leads to a dynamic regulation of the 20S proteasome proteolysis activity. Its function is as follows. Component of the proteasome core, a large protease complex with broad specificity involved in protein degradation. In Stackebrandtia nassauensis (strain DSM 44728 / CIP 108903 / NRRL B-16338 / NBRC 102104 / LLR-40K-21), this protein is Proteasome subunit beta.